Consider the following 480-residue polypeptide: Protein nucleotidyltransferase YdiU (480 aa).

ATP is bound by residues glycine 86, glycine 88, arginine 89, lysine 109, aspartate 121, glycine 122, arginine 172, and arginine 179. Aspartate 248 (proton acceptor) is an active-site residue. Mg(2+) contacts are provided by asparagine 249 and aspartate 258. Aspartate 258 serves as a coordination point for ATP.

This sequence belongs to the SELO family. Mg(2+) is required as a cofactor. It depends on Mn(2+) as a cofactor.

The catalysed reaction is L-seryl-[protein] + ATP = 3-O-(5'-adenylyl)-L-seryl-[protein] + diphosphate. It carries out the reaction L-threonyl-[protein] + ATP = 3-O-(5'-adenylyl)-L-threonyl-[protein] + diphosphate. It catalyses the reaction L-tyrosyl-[protein] + ATP = O-(5'-adenylyl)-L-tyrosyl-[protein] + diphosphate. The enzyme catalyses L-histidyl-[protein] + UTP = N(tele)-(5'-uridylyl)-L-histidyl-[protein] + diphosphate. The catalysed reaction is L-seryl-[protein] + UTP = O-(5'-uridylyl)-L-seryl-[protein] + diphosphate. It carries out the reaction L-tyrosyl-[protein] + UTP = O-(5'-uridylyl)-L-tyrosyl-[protein] + diphosphate. In terms of biological role, nucleotidyltransferase involved in the post-translational modification of proteins. It can catalyze the addition of adenosine monophosphate (AMP) or uridine monophosphate (UMP) to a protein, resulting in modifications known as AMPylation and UMPylation. The polypeptide is Protein nucleotidyltransferase YdiU (Salmonella paratyphi B (strain ATCC BAA-1250 / SPB7)).